The chain runs to 707 residues: Acetyl-coenzyme A synthetase 1 (707 aa).

Residues 242–245 (RGGK) and Thr-361 each bind CoA. Residues 437-439 (GEP), 461-466 (DTYWQT), Asp-553, and Arg-568 contribute to the ATP site. Ser-576 is a binding site for CoA. Position 579 (Arg-579) interacts with ATP. Arg-644 lines the CoA pocket. The Microbody targeting signal signature appears at 705-707 (VKL).

The protein belongs to the ATP-dependent AMP-binding enzyme family.

It localises to the microsome. The protein localises to the endoplasmic reticulum. The enzyme catalyses acetate + ATP + CoA = acetyl-CoA + AMP + diphosphate. May be required for assimilation of ethanol and acetate. The protein is Acetyl-coenzyme A synthetase 1 (ACS1) of Kluyveromyces lactis (strain ATCC 8585 / CBS 2359 / DSM 70799 / NBRC 1267 / NRRL Y-1140 / WM37) (Yeast).